Reading from the N-terminus, the 596-residue chain is Elongation factor 4 (596 aa).

The tr-type G domain occupies 2–184 (KHIRNFSIIA…VIVEQIPPPE (183 aa)). GTP contacts are provided by residues 14–19 (DHGKST) and 131–134 (NKID).

Belongs to the TRAFAC class translation factor GTPase superfamily. Classic translation factor GTPase family. LepA subfamily.

The protein resides in the cell inner membrane. The catalysed reaction is GTP + H2O = GDP + phosphate + H(+). In terms of biological role, required for accurate and efficient protein synthesis under certain stress conditions. May act as a fidelity factor of the translation reaction, by catalyzing a one-codon backward translocation of tRNAs on improperly translocated ribosomes. Back-translocation proceeds from a post-translocation (POST) complex to a pre-translocation (PRE) complex, thus giving elongation factor G a second chance to translocate the tRNAs correctly. Binds to ribosomes in a GTP-dependent manner. This is Elongation factor 4 from Shewanella sp. (strain MR-7).